We begin with the raw amino-acid sequence, 263 residues long: Triosephosphate isomerase (263 aa).

10-12 (NWK) is a substrate binding site. The active-site Electrophile is the His104. The active-site Proton acceptor is the Glu176. Substrate is bound by residues Gly182, Ser221, and 242-243 (GG).

This sequence belongs to the triosephosphate isomerase family. Homodimer.

The protein localises to the cytoplasm. The enzyme catalyses D-glyceraldehyde 3-phosphate = dihydroxyacetone phosphate. Its pathway is carbohydrate biosynthesis; gluconeogenesis. The protein operates within carbohydrate degradation; glycolysis; D-glyceraldehyde 3-phosphate from glycerone phosphate: step 1/1. Its function is as follows. Involved in the gluconeogenesis. Catalyzes stereospecifically the conversion of dihydroxyacetone phosphate (DHAP) to D-glyceraldehyde-3-phosphate (G3P). This chain is Triosephosphate isomerase, found in Haemophilus influenzae (strain PittEE).